We begin with the raw amino-acid sequence, 266 residues long: Type III pantothenate kinase (266 aa).

9-16 (DAGNSRIK) contributes to the ATP binding site. Residues Tyr-96 and 103 to 106 (GSDR) contribute to the substrate site. The active-site Proton acceptor is Asp-105. Thr-129 lines the ATP pocket. Residue Thr-189 coordinates substrate.

This sequence belongs to the type III pantothenate kinase family. As to quaternary structure, homodimer. The cofactor is NH4(+). K(+) is required as a cofactor.

The protein localises to the cytoplasm. The enzyme catalyses (R)-pantothenate + ATP = (R)-4'-phosphopantothenate + ADP + H(+). It functions in the pathway cofactor biosynthesis; coenzyme A biosynthesis; CoA from (R)-pantothenate: step 1/5. Functionally, catalyzes the phosphorylation of pantothenate (Pan), the first step in CoA biosynthesis. The chain is Type III pantothenate kinase from Burkholderia cenocepacia (strain ATCC BAA-245 / DSM 16553 / LMG 16656 / NCTC 13227 / J2315 / CF5610) (Burkholderia cepacia (strain J2315)).